The chain runs to 195 residues: MENHKSNNKENITIVDISRKINQLPEAERNLLENGSVYVGLNAALCGLIANSLFRRILNVTKARIAAGLPMAGIPFLTTDLTYRCFVSFPLNTGDLDCETCTITRSGLTGLVIGGLYPVFLAIPVNGGLAARYQSALLPHKGNILSYWIRTSKPVFRKMLFPILLQTMFSAYLGSEQYKLLIKALQLSEPGKEIH.

Residues 1–33 (MENHKSNNKENITIVDISRKINQLPEAERNLLE) are Mitochondrial matrix-facing. A helical transmembrane segment spans residues 34–54 (NGSVYVGLNAALCGLIANSLF). Over 55 to 56 (RR) the chain is Mitochondrial intermembrane. Residues 57-77 (ILNVTKARIAAGLPMAGIPFL) traverse the membrane as a helical segment. Topologically, residues 78–110 (TTDLTYRCFVSFPLNTGDLDCETCTITRSGLTG) are mitochondrial matrix. The chain crosses the membrane as a helical span at residues 111-131 (LVIGGLYPVFLAIPVNGGLAA). Residues 132-158 (RYQSALLPHKGNILSYWIRTSKPVFRK) lie on the Mitochondrial intermembrane side of the membrane. Residues 159–175 (MLFPILLQTMFSAYLGS) traverse the membrane as a helical segment. Over 176-195 (EQYKLLIKALQLSEPGKEIH) the chain is Mitochondrial matrix.

This sequence belongs to the TMEM126 family. Interacts with OXA1L; promoting cotranslational quality control in mitochondria. As to expression, strongly expressed in brain, cerebellum, skeletal muscle, testis. High expression also found in fetal brain, fetal retinal pigmentary epithelium, and fetal retina. Highly expressed in retinal ganglion cells.

It is found in the mitochondrion inner membrane. Functionally, protein required for the cotranslational protein quality control in the inner membrane of the mitochondria. Associates with newly synthesized polypeptides and may act as a chaperone that cooperates with OXA1L for the insertion of newly synthesized mitochondrial proteins into the inner membrane. Required for the assembly of the ND4 module of mitochondrial complex I. In Homo sapiens (Human), this protein is Transmembrane protein 126A.